A 116-amino-acid chain; its full sequence is Nucleoid-associated protein P9215_00191 (116 aa).

Belongs to the YbaB/EbfC family. Homodimer.

Its subcellular location is the cytoplasm. The protein localises to the nucleoid. Binds to DNA and alters its conformation. May be involved in regulation of gene expression, nucleoid organization and DNA protection. The chain is Nucleoid-associated protein P9215_00191 from Prochlorococcus marinus (strain MIT 9215).